The sequence spans 135 residues: Ribonuclease P protein component (135 aa).

Positions 115–135 are disordered; that stretch reads TNETVSPVSDTPLPQHERGSQ.

The protein belongs to the RnpA family. In terms of assembly, consists of a catalytic RNA component (M1 or rnpB) and a protein subunit.

It catalyses the reaction Endonucleolytic cleavage of RNA, removing 5'-extranucleotides from tRNA precursor.. RNaseP catalyzes the removal of the 5'-leader sequence from pre-tRNA to produce the mature 5'-terminus. It can also cleave other RNA substrates such as 4.5S RNA. The protein component plays an auxiliary but essential role in vivo by binding to the 5'-leader sequence and broadening the substrate specificity of the ribozyme. The chain is Ribonuclease P protein component from Chloroflexus aurantiacus (strain ATCC 29366 / DSM 635 / J-10-fl).